A 1038-amino-acid polypeptide reads, in one-letter code: MYNKIETSGNFVNMEEKIAKLWKDKDVIQKSFDRNEDGEYFTFYDGPPTANGKPHVGHVLTRVMKDLIPRYKVMKGYKVLRKAGWDTHGLPVELEIEKKLGISGKPQIEEYGVEKFVKECKDSVFKYTSLWKDMSEKLGFWVDMDNPYVTYHNTYIESVWWALKTMWEKDLLYKGHRVTPYCPRCGTALSSHEVAQGYKDVKEATAFVKFKVKGEENKYILAWTTTPWTLPSNVALAINKAYDYVEVEQNGEHLILAKDLAEKVLEGEYKVVKEFKGEELVGTEYEQLFKFEVPDKKAFYVVHADYVTLTDGTGIVHTAPAYGEDDNMTGKKYDLPLINLVDGEGKFVDSVTPWKGMFVKKADPKILEFMKENGSLYKSEKFTHSYPHCWRCDTPLLYYPKDSWFVRMTSLRDKLLENNNKINWNPDNIRTGRFGKFLENVIDWGISRDRYWGTPLPIWECECGHRECIGSIEELKEKGINVPDDIELHKPYIDGVKLTCPHCGKEMTRTNEVIDCWFDSGSMPFAQHHYPFENKEVFEKTFPAQFISEAVDQTRGWFYSLLAISTALFDTNSYENCIVLGHVLDKHGLKMSKSKGNVVDPFDVLQNEGADATRWHFYTASAPWLPTRFSEDDVKETQRKFLSTLWNVYSFYVLYAELDQFNPLEYKDFVSENVMDKWILSKLNTLIKTVEEDLDNYKITEAALELEDFVDELSNWYVRRNRSRFWSTELTDDKIGAYKTLYTVLTTIVKVAAPFVPFMAEEIYQNLVVNLDKDAIESVHLCTWPEYDLSVVDNELEGQMDLAYKIVKLGRSARNGANIKNRQPLSEMLISTKSLPDYYGDIIKEELNIKKVEFGADLSKYVNFEIKPNLPVLGKAYGRYIPAIRKAISSMDQMELAQNINNGKSVFINVDGLDEQIELTENNLLVAMQGLEGFAFAGSSGVGVILETTITEELREEGFVREILSKVQNLRKESGFEVADKIKLYFAGNETLEVVIKKFEEHIKKETLAVLISYNEDREYVDSKINGEELKIAVEKQD.

The 'HIGH' region signature appears at 48-58 (PTANGKPHVGH). The 'KMSKS' region motif lies at 590 to 594 (KMSKS). ATP is bound at residue K593.

Belongs to the class-I aminoacyl-tRNA synthetase family. IleS type 2 subfamily. As to quaternary structure, monomer. Requires Zn(2+) as cofactor.

The protein localises to the cytoplasm. It carries out the reaction tRNA(Ile) + L-isoleucine + ATP = L-isoleucyl-tRNA(Ile) + AMP + diphosphate. Its function is as follows. Catalyzes the attachment of isoleucine to tRNA(Ile). As IleRS can inadvertently accommodate and process structurally similar amino acids such as valine, to avoid such errors it has two additional distinct tRNA(Ile)-dependent editing activities. One activity is designated as 'pretransfer' editing and involves the hydrolysis of activated Val-AMP. The other activity is designated 'posttransfer' editing and involves deacylation of mischarged Val-tRNA(Ile). The protein is Isoleucine--tRNA ligase of Clostridium novyi (strain NT).